A 194-amino-acid chain; its full sequence is Imidazoleglycerol-phosphate dehydratase (194 aa).

The protein belongs to the imidazoleglycerol-phosphate dehydratase family.

It is found in the cytoplasm. It catalyses the reaction D-erythro-1-(imidazol-4-yl)glycerol 3-phosphate = 3-(imidazol-4-yl)-2-oxopropyl phosphate + H2O. Its pathway is amino-acid biosynthesis; L-histidine biosynthesis; L-histidine from 5-phospho-alpha-D-ribose 1-diphosphate: step 6/9. The chain is Imidazoleglycerol-phosphate dehydratase from Streptococcus sanguinis (strain SK36).